Consider the following 348-residue polypeptide: UDP-glucose 4-epimerase (348 aa).

NAD(+) contacts are provided by residues 12-14, 33-37, 66-67, Phe-88, and Lys-92; these read GYI, DNFHN, and DI. 132 to 134 is a binding site for substrate; that stretch reads SAT. The active-site Proton acceptor is the Tyr-157. Lys-161 and Tyr-185 together coordinate NAD(+). Residues 185–187, 206–208, 224–226, Arg-239, and 300–303 contribute to the substrate site; these read YFN, NNL, NVF, and REGD.

The protein belongs to the NAD(P)-dependent epimerase/dehydratase family. In terms of assembly, homodimer. NAD(+) is required as a cofactor.

It catalyses the reaction UDP-alpha-D-glucose = UDP-alpha-D-galactose. The catalysed reaction is UDP-N-acetyl-alpha-D-glucosamine = UDP-N-acetyl-alpha-D-galactosamine. Its pathway is carbohydrate metabolism; galactose metabolism. Functionally, catalyzes two distinct but analogous reactions: the reversible epimerization of UDP-glucose to UDP-galactose and the reversible epimerization of UDP-N-acetylglucosamine to UDP-N-acetylgalactosamine. The reaction with UDP-Gal plays a critical role in the Leloir pathway of galactose catabolism in which galactose is converted to the glycolytic intermediate glucose 6-phosphate. It contributes to the catabolism of dietary galactose and enables the endogenous biosynthesis of both UDP-Gal and UDP-GalNAc when exogenous sources are limited. Both UDP-sugar interconversions are important in the synthesis of glycoproteins and glycolipids. The polypeptide is UDP-glucose 4-epimerase (GALE) (Pongo abelii (Sumatran orangutan)).